The chain runs to 225 residues: PKHD-type hydroxylase YbiX (225 aa).

The Fe2OG dioxygenase domain occupies T78–S177. H96, D98, and H158 together coordinate Fe cation. R168 is a binding site for 2-oxoglutarate.

It depends on Fe(2+) as a cofactor. The cofactor is L-ascorbate.

The protein is PKHD-type hydroxylase YbiX of Shigella sonnei (strain Ss046).